Reading from the N-terminus, the 461-residue chain is Cysteine--tRNA ligase (461 aa).

Cys30 provides a ligand contact to Zn(2+). Positions 32 to 42 match the 'HIGH' region motif; sequence VTVYDLCHIGH. The Zn(2+) site is built by Cys211, His236, and Glu240. The 'KMSKS' region motif lies at 268-272; it reads KMSKS. Lys271 is an ATP binding site.

It belongs to the class-I aminoacyl-tRNA synthetase family. Monomer. It depends on Zn(2+) as a cofactor.

The protein resides in the cytoplasm. The enzyme catalyses tRNA(Cys) + L-cysteine + ATP = L-cysteinyl-tRNA(Cys) + AMP + diphosphate. This is Cysteine--tRNA ligase from Shewanella sp. (strain MR-4).